A 1491-amino-acid chain; its full sequence is Terminal uridylyltransferase 7 (1491 aa).

Thr-64 is subject to Phosphothreonine. Residues Ser-132 and Ser-172 each carry the phosphoserine modification. The tract at residues 165 to 203 is disordered; that stretch reads MSEMEAGSPENKKQRSRPRKPRRTRTEDSEQDGDLDGPV. Residues 178 to 187 show a composition bias toward basic residues; it reads QRSRPRKPRR. The Matrin-type zinc finger occupies 244 to 274; the sequence is YTCKLCDALIDSIPFAHKHIKEKRHKKNLKE. The region spanning 551 to 600 is the PAP-associated 1 domain; it reads VGQLWVELLRFYALEFNLADLVISIRVKELISRESKDWPKKRIAIEDPYS. Ser-600 and Ser-747 each carry phosphoserine. Disordered stretches follow at residues 740 to 774 and 834 to 911; these read AELP…KHPE and QSRT…CGEN. A compositionally biased stretch (acidic residues) spans 844-857; it reads DDEEEEEEEEEEEE. Thr-865 is modified (phosphothreonine). Positions 885–897 are enriched in acidic residues; that stretch reads GEEDALSEEDDLA. At Ser-891 the chain carries Phosphoserine. Positions 947–1491 are sufficient for monouridylation activity; the sequence is RKLTFTKGKS…ASVKRTQQES (545 aa). The segment at 959–976 adopts a CCHC-type 1 zinc-finger fold; that stretch reads VVCSLCKREGHLKKDCPE. UTP contacts are provided by residues 1043-1046, 1053-1056, Asn-1126, Lys-1148, 1166-1170, and His-1282; these read SSKN, SDLD, and SYAYT. Mg(2+) is bound by residues Asp-1054 and Asp-1056. A PAP-associated 2 domain is found at 1230 to 1282; sequence VGQLWLGLLRFYTEEFDFKEHVISIRRKSLLTTFKKQWTSKYIVIEDPFDLNH. The CCHC-type 2 zinc-finger motif lies at 1341 to 1358; it reads RCCRICGKIGHFMKDCPM. Disordered regions lie at residues 1362–1399 and 1463–1491; these read VRRR…EKEV and PQFK…QQES. The segment covering 1377–1399 has biased composition (basic and acidic residues); that stretch reads SESKEKRSKEDKEIQNKYTEKEV. The segment at 1447 to 1464 adopts a CCHC-type 3 zinc-finger fold; that stretch reads KRCFICGREGHIKKECPQ. A compositionally biased stretch (polar residues) spans 1470-1481; it reads GSLSSKYMTQGR.

It belongs to the DNA polymerase type-B-like family. It depends on Mg(2+) as a cofactor. The cofactor is Mn(2+).

It localises to the cytoplasm. It catalyses the reaction RNA(n) + UTP = RNA(n)-3'-uridine ribonucleotide + diphosphate. Functionally, uridylyltransferase that mediates the terminal uridylation of mRNAs with short (less than 25 nucleotides) poly(A) tails, hence facilitating global mRNA decay. Essential for both oocyte maturation and fertility. Through 3' terminal uridylation of mRNA, sculpts, with TUT7, the maternal transcriptome by eliminating transcripts during oocyte growth. Involved in microRNA (miRNA)-induced gene silencing through uridylation of deadenylated miRNA targets. Also acts as a suppressor of miRNA biogenesis by mediating the terminal uridylation of miRNA precursors, including that of let-7 (pre-let-7). Uridylated pre-let-7 RNA is not processed by Dicer and undergo degradation. Pre-let-7 uridylation is strongly enhanced in the presence of LIN28A. Due to functional redundancy between ZCCHC6 and ZCCHC11, the identification of the specific role of each of these proteins is difficult. Involved in microRNA (miRNA)-induced gene silencing through uridylation of deadenylated miRNA targets. Also functions as an integral regulator of microRNA biogenesiS using 3 different uridylation mechanisms. Acts as a suppressor of miRNA biogenesis by mediating the terminal uridylation of some miRNA precursors, including that of let-7 (pre-let-7). Uridylated pre-let-7 RNA is not processed by Dicer and undergo degradation. Pre-let-7 oligouridylation is strongly enhanced in the presence of LIN28A. In the absence of LIN28A, TUT7 and TUT4 monouridylate group II pre-miRNAs, which includes most of pre-let7 members, that shapes an optimal 3' end overhang for efficient processing. Add oligo-U tails to truncated pre-miRNAS with a 5' overhang which may promote rapid degradation of non-functional pre-miRNA species. Does not play a role in replication-dependent histone mRNA degradation. Due to functional redundancy between TUT4 and TUT7, the identification of the specific role of each of these proteins is difficult. TUT4 and TUT7 restrict retrotransposition of long interspersed element-1 (LINE-1) in cooperation with MOV10 counteracting the RNA chaperonne activity of L1RE1. TUT7 uridylates LINE-1 mRNAs in the cytoplasm which inhibits initiation of reverse transcription once in the nucleus, whereas uridylation by TUT4 destabilizes mRNAs in cytoplasmic ribonucleoprotein granules. This is Terminal uridylyltransferase 7 from Mus musculus (Mouse).